We begin with the raw amino-acid sequence, 329 residues long: tRNA pseudouridine synthase B (329 aa).

Histidine 43 is a binding site for substrate. Aspartate 48 acts as the Nucleophile in catalysis. Residues tyrosine 76, tyrosine 179, and leucine 200 each coordinate substrate.

It belongs to the pseudouridine synthase TruB family. Type 1 subfamily.

The catalysed reaction is uridine(55) in tRNA = pseudouridine(55) in tRNA. In terms of biological role, responsible for synthesis of pseudouridine from uracil-55 in the psi GC loop of transfer RNAs. In Yersinia enterocolitica serotype O:8 / biotype 1B (strain NCTC 13174 / 8081), this protein is tRNA pseudouridine synthase B.